An 88-amino-acid polypeptide reads, in one-letter code: MYLTKEKKEEIFAQHGDAKNTGKAEGQIALFTYRISHLTEHLKKNRHDYNTERSLVLLVGKRRALLDYLKKKDINRYREIIKVLNIRK.

This sequence belongs to the universal ribosomal protein uS15 family. Part of the 30S ribosomal subunit. Forms a bridge to the 50S subunit in the 70S ribosome, contacting the 23S rRNA.

Functionally, one of the primary rRNA binding proteins, it binds directly to 16S rRNA where it helps nucleate assembly of the platform of the 30S subunit by binding and bridging several RNA helices of the 16S rRNA. Its function is as follows. Forms an intersubunit bridge (bridge B4) with the 23S rRNA of the 50S subunit in the ribosome. This Flavobacterium johnsoniae (strain ATCC 17061 / DSM 2064 / JCM 8514 / BCRC 14874 / CCUG 350202 / NBRC 14942 / NCIMB 11054 / UW101) (Cytophaga johnsonae) protein is Small ribosomal subunit protein uS15.